A 186-amino-acid chain; its full sequence is Putative adenylate kinase (186 aa).

Residues glycine 10, glycine 12, lysine 13, threonine 14, and serine 15 each contribute to the ATP site. Residues 30 to 53 are NMP; the sequence is HLNELIKEEHLYTEVDEKRDSVVA. An LID region spans residues 108–118; it reads KRGYSEEKVNE. Arginine 109 lines the ATP pocket.

It belongs to the adenylate kinase family. AK6 subfamily. Interacts with uS11. Not a structural component of 40S pre-ribosomes, but transiently interacts with them by binding to uS11.

The enzyme catalyses AMP + ATP = 2 ADP. The catalysed reaction is ATP + H2O = ADP + phosphate + H(+). Broad-specificity nucleoside monophosphate (NMP) kinase that catalyzes the reversible transfer of the terminal phosphate group between nucleoside triphosphates and monophosphates. Also has ATPase activity. Involved in the late maturation steps of the 30S ribosomal particles, specifically 16S rRNA maturation. While NMP activity is not required for ribosome maturation, ATPase activity is. Associates transiently with small ribosomal subunit protein uS11. ATP hydrolysis breaks the interaction with uS11. May temporarily remove uS11 from the ribosome to enable a conformational change of the ribosomal RNA that is needed for the final maturation step of the small ribosomal subunit. This Methanosarcina acetivorans (strain ATCC 35395 / DSM 2834 / JCM 12185 / C2A) protein is Putative adenylate kinase.